Consider the following 110-residue polypeptide: Auxin-responsive protein SAUR71 (110 aa).

This sequence belongs to the ARG7 family. As to expression, highly expressed in the steles of roots and hypocotyls.

The protein localises to the cytoplasm. Plays a role in the regulation of cell expansion, root meristem patterning and auxin transport. The chain is Auxin-responsive protein SAUR71 from Arabidopsis thaliana (Mouse-ear cress).